We begin with the raw amino-acid sequence, 174 residues long: RNA pyrophosphohydrolase (174 aa).

A Nudix hydrolase domain is found at 6–149 (GFRANVGIII…KRDVYRKVMK (144 aa)). A Nudix box motif is present at residues 38 to 59 (GGVDDGETAEEAMYRELYEEVG).

This sequence belongs to the Nudix hydrolase family. RppH subfamily. The cofactor is a divalent metal cation.

Accelerates the degradation of transcripts by removing pyrophosphate from the 5'-end of triphosphorylated RNA, leading to a more labile monophosphorylated state that can stimulate subsequent ribonuclease cleavage. This is RNA pyrophosphohydrolase from Shewanella sp. (strain MR-7).